Consider the following 68-residue polypeptide: Figainin 1 (68 aa).

A signal peptide spans 1-22 (MAFLKKSLFLVLFLGLVSLSIG). Residues 23-45 (EEEKREEEEKNEEGANQEENAEN) are disordered. A propeptide spanning residues 23–47 (EEEKREEEEKNEEGANQEENAENKE) is cleaved from the precursor. Residues 26–42 (KREEEEKNEEGANQEEN) are compositionally biased toward acidic residues. Lys67 is subject to Lysine amide.

In terms of tissue distribution, expressed by the skin glands.

The protein resides in the secreted. Its function is as follows. Antimicrobial peptide that displays antibacterial and antiprotozoal activity. Exhibits antibacterial activity against the Gram-positive bacteria S.epidermidis ATCC 12228 (MIC=2 uM), E.casseliflavus ATCC 700327 (MIC=16 uM), S.aureus ATCC 25923 (MIC=4 uM) and E.faecalis ATCC 29212 (MIC=8 uM), and the Gram-negative bacteria E.coli ATCC 25922 (MIC=16 uM) and K.pneumoniae ATCC 13883 (MIC=4 uM). Displays antiprotozoal activity against the epimastigote form of T.cruzi (IC(50)=15.9 uM). Does not show antimicrobial activity against the Gram-negative bacterium P.aeruginosa ATCC 27853, or the fungi C.albicans ATCC 90028 and C.parapsilosis ATCC 22019. Shows high cytolytic activity against human erythrocytes (HC(50)=10 uM), and displays anti-proliferative effects against various cancer cell lines including MCF-7 breast cancer cells (IC(50)=13.7 uM), HeLa cervical adenocarcinoma cells (IC(50)=11.1 uM) and B16F10 murine melanoma cells (IC(50)=10.5 uM). The sequence is that of Figainin 1 from Boana raniceps (Chaco tree frog).